The following is a 330-amino-acid chain: ADP-L-glycero-D-manno-heptose-6-epimerase (330 aa).

NADP(+) contacts are provided by residues 11-12 (FI), 32-33 (DD), Gln-39, Gln-54, 75-79 (QGACA), and Asn-92. Tyr-139 functions as the Proton acceptor in the catalytic mechanism. Residue Lys-143 participates in NADP(+) binding. Residue Asn-168 coordinates substrate. The NADP(+) site is built by Val-169 and Lys-177. Lys-177 functions as the Proton acceptor in the catalytic mechanism. Residues Arg-179, His-186, 200-203 (FGEH), Arg-213, and Tyr-292 each bind substrate.

It belongs to the NAD(P)-dependent epimerase/dehydratase family. HldD subfamily. As to quaternary structure, homopentamer. NADP(+) serves as cofactor.

The catalysed reaction is ADP-D-glycero-beta-D-manno-heptose = ADP-L-glycero-beta-D-manno-heptose. It functions in the pathway nucleotide-sugar biosynthesis; ADP-L-glycero-beta-D-manno-heptose biosynthesis; ADP-L-glycero-beta-D-manno-heptose from D-glycero-beta-D-manno-heptose 7-phosphate: step 4/4. Its function is as follows. Catalyzes the interconversion between ADP-D-glycero-beta-D-manno-heptose and ADP-L-glycero-beta-D-manno-heptose via an epimerization at carbon 6 of the heptose. The protein is ADP-L-glycero-D-manno-heptose-6-epimerase of Pseudomonas paraeruginosa (strain DSM 24068 / PA7) (Pseudomonas aeruginosa (strain PA7)).